A 336-amino-acid polypeptide reads, in one-letter code: MDLIIPKDYDPKLSIRETQEAIRYIRETFQDEFGKEMGLNRVSAPMYVEKSSGINDNLNGYEKPVSFTMKDMPGETIEVVHSLAKWKRMALKKYGFGLHEGLYTNMNAIRKDEDLDNFHSSYVDQWDWEKVISKDERNEKTLKETVELIFKVVKHMEHEVWYKFPNAVYHLPDKIHFITSQELEDKYPELEDAKDRENAICKELGCVFVMQIGDVLKSGKRHDGRAPDYDDWKLNGDILFWYEPLQCALELSSMGIRVDEDSMVEQLKKTGDEDRLKLQYHKMILNKELPYTIGGGIGQSRLCMLLLGKAHVGEVQASIWPDEMLKKCEENGIHIL.

It belongs to the class-II aminoacyl-tRNA synthetase family. AsnA subfamily.

Its subcellular location is the cytoplasm. It catalyses the reaction L-aspartate + NH4(+) + ATP = L-asparagine + AMP + diphosphate + H(+). The protein operates within amino-acid biosynthesis; L-asparagine biosynthesis; L-asparagine from L-aspartate (ammonia route): step 1/1. This chain is Aspartate--ammonia ligase, found in Ligilactobacillus salivarius (strain UCC118) (Lactobacillus salivarius).